The primary structure comprises 94 residues: Integration host factor subunit beta (94 aa).

The protein belongs to the bacterial histone-like protein family. In terms of assembly, heterodimer of an alpha and a beta chain.

Functionally, this protein is one of the two subunits of integration host factor, a specific DNA-binding protein that functions in genetic recombination as well as in transcriptional and translational control. In Vibrio atlanticus (strain LGP32) (Vibrio splendidus (strain Mel32)), this protein is Integration host factor subunit beta.